The sequence spans 324 residues: Pseudouridine-5'-phosphate glycosidase (324 aa).

The active-site Proton donor is the E43. Substrate contacts are provided by K104 and V124. D156 is a Mn(2+) binding site. 158-160 (SAD) contributes to the substrate binding site. K177 serves as the catalytic Nucleophile.

This sequence belongs to the pseudouridine-5'-phosphate glycosidase family. As to quaternary structure, homotrimer. Requires Mn(2+) as cofactor.

It catalyses the reaction D-ribose 5-phosphate + uracil = psi-UMP + H2O. Functionally, catalyzes the reversible cleavage of pseudouridine 5'-phosphate (PsiMP) to ribose 5-phosphate and uracil. Functions biologically in the cleavage direction, as part of a pseudouridine degradation pathway. The polypeptide is Pseudouridine-5'-phosphate glycosidase (Salinispora tropica (strain ATCC BAA-916 / DSM 44818 / JCM 13857 / NBRC 105044 / CNB-440)).